The sequence spans 281 residues: Pantothenate synthetase (281 aa).

Position 26–33 (26–33 (MGSLHEGH)) interacts with ATP. Catalysis depends on His33, which acts as the Proton donor. Gln57 is a binding site for (R)-pantoate. Position 57 (Gln57) interacts with beta-alanine. Residue 144 to 147 (GKKD) coordinates ATP. Gln150 contacts (R)-pantoate. Residues Ala173 and 181–184 (LSSR) contribute to the ATP site.

This sequence belongs to the pantothenate synthetase family. As to quaternary structure, homodimer.

Its subcellular location is the cytoplasm. It catalyses the reaction (R)-pantoate + beta-alanine + ATP = (R)-pantothenate + AMP + diphosphate + H(+). It participates in cofactor biosynthesis; (R)-pantothenate biosynthesis; (R)-pantothenate from (R)-pantoate and beta-alanine: step 1/1. In terms of biological role, catalyzes the condensation of pantoate with beta-alanine in an ATP-dependent reaction via a pantoyl-adenylate intermediate. The polypeptide is Pantothenate synthetase (Methylibium petroleiphilum (strain ATCC BAA-1232 / LMG 22953 / PM1)).